A 208-amino-acid polypeptide reads, in one-letter code: Pyridoxine/pyridoxamine 5'-phosphate oxidase (208 aa).

FMN-binding positions include 55–60 (RMVLLK), 70–71 (YT), lysine 76, lysine 77, and glutamine 99. Residue lysine 60 coordinates substrate. The substrate site is built by tyrosine 117, arginine 121, and serine 125. Residues 134 to 135 (QS) and tryptophan 179 each bind FMN. 185-187 (RLH) provides a ligand contact to substrate. Arginine 189 provides a ligand contact to FMN.

This sequence belongs to the pyridoxamine 5'-phosphate oxidase family. As to quaternary structure, homodimer. FMN serves as cofactor.

It carries out the reaction pyridoxamine 5'-phosphate + O2 + H2O = pyridoxal 5'-phosphate + H2O2 + NH4(+). It catalyses the reaction pyridoxine 5'-phosphate + O2 = pyridoxal 5'-phosphate + H2O2. It functions in the pathway cofactor metabolism; pyridoxal 5'-phosphate salvage; pyridoxal 5'-phosphate from pyridoxamine 5'-phosphate: step 1/1. The protein operates within cofactor metabolism; pyridoxal 5'-phosphate salvage; pyridoxal 5'-phosphate from pyridoxine 5'-phosphate: step 1/1. Catalyzes the oxidation of either pyridoxine 5'-phosphate (PNP) or pyridoxamine 5'-phosphate (PMP) into pyridoxal 5'-phosphate (PLP). This chain is Pyridoxine/pyridoxamine 5'-phosphate oxidase, found in Brucella ovis (strain ATCC 25840 / 63/290 / NCTC 10512).